A 346-amino-acid polypeptide reads, in one-letter code: Sensor protein kinase GraS (346 aa).

A run of 2 helical transmembrane segments spans residues 15–35 (MNWI…SLID) and 43–63 (LFYI…LTYF). In terms of domain architecture, Histidine kinase spans 126 to 332 (EFVHDIKTPV…TVRLIFPLQN (207 aa)).

Interacts with GraX.

The protein resides in the cell membrane. The catalysed reaction is ATP + protein L-histidine = ADP + protein N-phospho-L-histidine.. Member of the two-component regulatory system GraR/GraS involved in resistance against cationic antimicrobial peptides (CAMPs). Functions as a sensor protein kinase which phosphorylates GraR through the auxiliary protein GraX. In turn, GraR up-regulates many genes such as adhesins, exoproteins, transporters, toxins, and proteins involved in cell wall synthesis. Down-regulates the expression of many genes involved in RNA and amino acid synthesis or glycolysis. The chain is Sensor protein kinase GraS (graS) from Staphylococcus aureus (strain MSSA476).